The primary structure comprises 33 residues: Photosystem II reaction center protein Psb30 (33 aa).

The helical transmembrane segment at 8–28 threads the bilayer; sequence QLGSLLLITVAGPLIVFFLFI.

It belongs to the Psb30/Ycf12 family. PSII is composed of 1 copy each of membrane proteins PsbA, PsbB, PsbC, PsbD, PsbE, PsbF, PsbH, PsbI, PsbJ, PsbK, PsbL, PsbM, PsbT, PsbY, PsbZ, Psb30/Ycf12, peripheral proteins of the oxygen-evolving complex and a large number of cofactors. It forms dimeric complexes.

It is found in the plastid. Its subcellular location is the chloroplast thylakoid membrane. A core subunit of photosystem II (PSII), probably helps stabilize the reaction center. In Euglena anabaena (Euglenaria anabaena), this protein is Photosystem II reaction center protein Psb30.